A 71-amino-acid polypeptide reads, in one-letter code: Small ribosomal subunit protein bS18 (71 aa).

The protein belongs to the bacterial ribosomal protein bS18 family. As to quaternary structure, part of the 30S ribosomal subunit. Forms a tight heterodimer with protein bS6.

Its function is as follows. Binds as a heterodimer with protein bS6 to the central domain of the 16S rRNA, where it helps stabilize the platform of the 30S subunit. This chain is Small ribosomal subunit protein bS18, found in Synechococcus sp. (strain JA-2-3B'a(2-13)) (Cyanobacteria bacterium Yellowstone B-Prime).